Here is a 404-residue protein sequence, read N- to C-terminus: Flavohemoprotein (404 aa).

In terms of domain architecture, Globin spans 1–138 (MLSEQTRSLV…LADTLIGIEN (138 aa)). His85 provides a ligand contact to heme b. Catalysis depends on charge relay system residues Tyr95 and Glu137. Residues 149 to 404 (GGWSGWRPFR…EVFGSHPGDD (256 aa)) form a reductase region. Positions 152 to 263 (SGWRPFRVAK…SAPQGDFFLH (112 aa)) constitute an FAD-binding FR-type domain. Residues Tyr190 and 206–209 (RQYS) contribute to the FAD site. Residue 276 to 281 (GVGQTP) participates in NADP(+) binding. 396 to 399 (VFGS) provides a ligand contact to FAD.

This sequence belongs to the globin family. Two-domain flavohemoproteins subfamily. It in the C-terminal section; belongs to the flavoprotein pyridine nucleotide cytochrome reductase family. Heme b is required as a cofactor. It depends on FAD as a cofactor.

It catalyses the reaction 2 nitric oxide + NADPH + 2 O2 = 2 nitrate + NADP(+) + H(+). It carries out the reaction 2 nitric oxide + NADH + 2 O2 = 2 nitrate + NAD(+) + H(+). In terms of biological role, is involved in NO detoxification in an aerobic process, termed nitric oxide dioxygenase (NOD) reaction that utilizes O(2) and NAD(P)H to convert NO to nitrate, which protects the bacterium from various noxious nitrogen compounds. Therefore, plays a central role in the inducible response to nitrosative stress. The sequence is that of Flavohemoprotein from Chromobacterium violaceum (strain ATCC 12472 / DSM 30191 / JCM 1249 / CCUG 213 / NBRC 12614 / NCIMB 9131 / NCTC 9757 / MK).